A 373-amino-acid polypeptide reads, in one-letter code: Inhibitor of nuclear factor kappa-B kinase-interacting protein (373 aa).

Basic residues predominate over residues 1-11; sequence MSEVKSRKKPG. Residues 1–38 are disordered; sequence MSEVKSRKKPGPKVAAPEPEKRSDGRKNPEARGGAGWA. Residues 18-30 show a composition bias toward basic and acidic residues; the sequence is EPEKRSDGRKNPE. The chain crosses the membrane as a helical span at residues 43–59; sequence GLSLLSLATSLGLAWLV. Coiled coils occupy residues 64 to 257 and 290 to 325; these read EKFA…DKLS and TERKMEELTVQMFNMEDDMLKAVSEIMEMQNTLEGI. The N-linked (GlcNAc...) asparagine glycan is linked to asparagine 151.

Post-translationally, N-glycosylated at Asn-151.

It is found in the endoplasmic reticulum membrane. In terms of biological role, target of p53/TP53 with pro-apoptotic function. In Rattus norvegicus (Rat), this protein is Inhibitor of nuclear factor kappa-B kinase-interacting protein (Ikbip).